The primary structure comprises 339 residues: Phenylalanine--tRNA ligase alpha subunit (339 aa).

Glu254 lines the Mg(2+) pocket.

It belongs to the class-II aminoacyl-tRNA synthetase family. Phe-tRNA synthetase alpha subunit type 1 subfamily. In terms of assembly, tetramer of two alpha and two beta subunits. The cofactor is Mg(2+).

It localises to the cytoplasm. It catalyses the reaction tRNA(Phe) + L-phenylalanine + ATP = L-phenylalanyl-tRNA(Phe) + AMP + diphosphate + H(+). This Clostridium perfringens (strain SM101 / Type A) protein is Phenylalanine--tRNA ligase alpha subunit.